Reading from the N-terminus, the 192-residue chain is MGVPERPTLLLLLSLLLIPLGLPVLCAPPRLICDSRVLERYILEAKEAENVTMGCAEGPRLSENITVPDTKVNFYAWKRMKVEEQAVEVWQGLSLLSEAILQAQALQANSSQPPESLQLHIDKAISGLRSLTSLLRVLGAQKELMSPPDATQAAPLRTLTADTFCKLFRVYSNFLRGKLKLYTGEACRRGDR.

The signal sequence occupies residues 1-26 (MGVPERPTLLLLLSLLLIPLGLPVLC). Cysteines 33 and 187 form a disulfide. Asn50, Asn64, and Asn109 each carry an N-linked (GlcNAc...) asparagine glycan.

The protein belongs to the EPO/TPO family. Produced by kidney or liver of adult mammals and by liver of fetal or neonatal mammals.

It is found in the secreted. Its function is as follows. Hormone involved in the regulation of erythrocyte proliferation and differentiation and the maintenance of a physiological level of circulating erythrocyte mass. Binds to EPOR leading to EPOR dimerization and JAK2 activation thereby activating specific downstream effectors, including STAT1 and STAT3. The protein is Erythropoietin (Epo) of Rattus norvegicus (Rat).